A 247-amino-acid polypeptide reads, in one-letter code: Triosephosphate isomerase (247 aa).

Position 9 to 11 (9 to 11 (NWK)) interacts with substrate. Histidine 94 acts as the Electrophile in catalysis. Glutamate 165 (proton acceptor) is an active-site residue. Residues glycine 171, serine 209, and 230-231 (GG) each bind substrate.

Belongs to the triosephosphate isomerase family. Homodimer.

The protein localises to the cytoplasm. It catalyses the reaction D-glyceraldehyde 3-phosphate = dihydroxyacetone phosphate. Its pathway is carbohydrate biosynthesis; gluconeogenesis. The protein operates within carbohydrate degradation; glycolysis; D-glyceraldehyde 3-phosphate from glycerone phosphate: step 1/1. Involved in the gluconeogenesis. Catalyzes stereospecifically the conversion of dihydroxyacetone phosphate (DHAP) to D-glyceraldehyde-3-phosphate (G3P). The protein is Triosephosphate isomerase of Albidiferax ferrireducens (strain ATCC BAA-621 / DSM 15236 / T118) (Rhodoferax ferrireducens).